The primary structure comprises 198 residues: Acireductone dioxygenase 2 (198 aa).

Residues His-99, His-101, Glu-105, and His-144 each coordinate Fe(2+). Residues His-99, His-101, Glu-105, and His-144 each coordinate Ni(2+).

This sequence belongs to the acireductone dioxygenase (ARD) family. The cofactor is Fe(2+). It depends on Ni(2+) as a cofactor. As to expression, ubiquitous.

The protein resides in the cytoplasm. It localises to the nucleus. The enzyme catalyses 1,2-dihydroxy-5-(methylsulfanyl)pent-1-en-3-one + O2 = 4-methylsulfanyl-2-oxobutanoate + formate + 2 H(+). It carries out the reaction 1,2-dihydroxy-5-(methylsulfanyl)pent-1-en-3-one + O2 = 3-(methylsulfanyl)propanoate + CO + formate + 2 H(+). It participates in amino-acid biosynthesis; L-methionine biosynthesis via salvage pathway; L-methionine from S-methyl-5-thio-alpha-D-ribose 1-phosphate: step 5/6. Catalyzes 2 different reactions between oxygen and the acireductone 1,2-dihydroxy-3-keto-5-methylthiopentene (DHK-MTPene) depending upon the metal bound in the active site. Fe-containing acireductone dioxygenase (Fe-ARD) produces formate and 2-keto-4-methylthiobutyrate (KMTB), the alpha-ketoacid precursor of methionine in the methionine recycle pathway. Ni-containing acireductone dioxygenase (Ni-ARD) produces methylthiopropionate, carbon monoxide and formate, and does not lie on the methionine recycle pathway. The polypeptide is Acireductone dioxygenase 2 (ARD2) (Oryza sativa subsp. indica (Rice)).